A 597-amino-acid chain; its full sequence is tRNA uridine 5-carboxymethylaminomethyl modification enzyme MnmG (597 aa).

10–15 (GGGHAG) is a binding site for FAD. 267–281 (GPRYCPSIEDKVVRF) serves as a coordination point for NAD(+).

The protein belongs to the MnmG family. In terms of assembly, homodimer. Heterotetramer of two MnmE and two MnmG subunits. FAD serves as cofactor.

Its subcellular location is the cytoplasm. NAD-binding protein involved in the addition of a carboxymethylaminomethyl (cmnm) group at the wobble position (U34) of certain tRNAs, forming tRNA-cmnm(5)s(2)U34. This is tRNA uridine 5-carboxymethylaminomethyl modification enzyme MnmG from Thermus thermophilus (strain ATCC 27634 / DSM 579 / HB8).